The sequence spans 365 residues: Probable dual-specificity RNA methyltransferase RlmN (365 aa).

Glutamate 108 (proton acceptor) is an active-site residue. The Radical SAM core domain maps to 114 to 352 (YPDRNTVCIS…SCTVRDTRGR (239 aa)). Cysteine 121 and cysteine 358 form a disulfide bridge. [4Fe-4S] cluster contacts are provided by cysteine 128, cysteine 132, and cysteine 135. S-adenosyl-L-methionine-binding positions include 179-180 (GE), serine 213, 236-238 (SLH), and asparagine 315. Cysteine 358 functions as the S-methylcysteine intermediate in the catalytic mechanism.

This sequence belongs to the radical SAM superfamily. RlmN family. [4Fe-4S] cluster is required as a cofactor.

The protein localises to the cytoplasm. It carries out the reaction adenosine(2503) in 23S rRNA + 2 reduced [2Fe-2S]-[ferredoxin] + 2 S-adenosyl-L-methionine = 2-methyladenosine(2503) in 23S rRNA + 5'-deoxyadenosine + L-methionine + 2 oxidized [2Fe-2S]-[ferredoxin] + S-adenosyl-L-homocysteine. The catalysed reaction is adenosine(37) in tRNA + 2 reduced [2Fe-2S]-[ferredoxin] + 2 S-adenosyl-L-methionine = 2-methyladenosine(37) in tRNA + 5'-deoxyadenosine + L-methionine + 2 oxidized [2Fe-2S]-[ferredoxin] + S-adenosyl-L-homocysteine. Its function is as follows. Specifically methylates position 2 of adenine 2503 in 23S rRNA and position 2 of adenine 37 in tRNAs. This chain is Probable dual-specificity RNA methyltransferase RlmN, found in Mycolicibacterium vanbaalenii (strain DSM 7251 / JCM 13017 / BCRC 16820 / KCTC 9966 / NRRL B-24157 / PYR-1) (Mycobacterium vanbaalenii).